A 389-amino-acid polypeptide reads, in one-letter code: S-adenosylmethionine synthase (389 aa).

Residue histidine 15 participates in ATP binding. Aspartate 17 lines the Mg(2+) pocket. Glutamate 43 provides a ligand contact to K(+). Residues glutamate 56 and glutamine 99 each coordinate L-methionine. The flexible loop stretch occupies residues 99 to 109; the sequence is QSPDIAQGVNE. ATP is bound by residues 166–168, 234–235, aspartate 243, 249–250, alanine 266, and lysine 270; these read DAK, RF, and RK. Aspartate 243 contacts L-methionine. Lysine 274 contacts L-methionine.

Belongs to the AdoMet synthase family. As to quaternary structure, homotetramer; dimer of dimers. Mg(2+) is required as a cofactor. K(+) serves as cofactor.

The protein resides in the cytoplasm. The catalysed reaction is L-methionine + ATP + H2O = S-adenosyl-L-methionine + phosphate + diphosphate. Its pathway is amino-acid biosynthesis; S-adenosyl-L-methionine biosynthesis; S-adenosyl-L-methionine from L-methionine: step 1/1. In terms of biological role, catalyzes the formation of S-adenosylmethionine (AdoMet) from methionine and ATP. The overall synthetic reaction is composed of two sequential steps, AdoMet formation and the subsequent tripolyphosphate hydrolysis which occurs prior to release of AdoMet from the enzyme. The chain is S-adenosylmethionine synthase from Neisseria gonorrhoeae (strain ATCC 700825 / FA 1090).